The following is a 217-amino-acid chain: 3,4-dihydroxy-2-butanone 4-phosphate synthase (217 aa).

D-ribulose 5-phosphate is bound by residues 37 to 38 (RE), Asp-42, 150 to 154 (RGGHT), and Glu-174. Glu-38 contacts Mg(2+). A Mg(2+)-binding site is contributed by His-153.

It belongs to the DHBP synthase family. In terms of assembly, homodimer. Requires Mg(2+) as cofactor. Mn(2+) is required as a cofactor.

The catalysed reaction is D-ribulose 5-phosphate = (2S)-2-hydroxy-3-oxobutyl phosphate + formate + H(+). It functions in the pathway cofactor biosynthesis; riboflavin biosynthesis; 2-hydroxy-3-oxobutyl phosphate from D-ribulose 5-phosphate: step 1/1. Functionally, catalyzes the conversion of D-ribulose 5-phosphate to formate and 3,4-dihydroxy-2-butanone 4-phosphate. The protein is 3,4-dihydroxy-2-butanone 4-phosphate synthase of Pectobacterium atrosepticum (strain SCRI 1043 / ATCC BAA-672) (Erwinia carotovora subsp. atroseptica).